The sequence spans 315 residues: MSKEQTLMTPYLQFDRNQWAALRDSVPMTLTEGEIARLKGINEDLSLEEVAEIYLPLSRLLNFYISSNLRRQAVLEQFLGTNGQRIPYIISIAGSVAVGKSTTARVLQALLSRWPEHRRVELITTDGFLHPNQVLKDRGLMKKKGFPESYDMHRLVKFVSDLKSGVPNVTAPVYSHLIYDVIPDGDKTVAQPDILILEGLNVLQSGMDYPHDPHHVFVSDFVDFSIYVDAPEDLLQTWYINRFLKFREGAFTDPDSYFHNYAKLSKDEAINTAASLWKEINWLNLKQNILPTRERASLIMTKSANHAVEQVRLRK.

94-101 is a binding site for ATP; it reads GSVAVGKS.

This sequence belongs to the prokaryotic pantothenate kinase family.

The protein resides in the cytoplasm. It carries out the reaction (R)-pantothenate + ATP = (R)-4'-phosphopantothenate + ADP + H(+). It functions in the pathway cofactor biosynthesis; coenzyme A biosynthesis; CoA from (R)-pantothenate: step 1/5. In Citrobacter koseri (strain ATCC BAA-895 / CDC 4225-83 / SGSC4696), this protein is Pantothenate kinase.